Reading from the N-terminus, the 137-residue chain is Large ribosomal subunit protein uL16 (137 aa).

It belongs to the universal ribosomal protein uL16 family. As to quaternary structure, part of the 50S ribosomal subunit.

Binds 23S rRNA and is also seen to make contacts with the A and possibly P site tRNAs. The sequence is that of Large ribosomal subunit protein uL16 from Wolbachia pipientis subsp. Culex pipiens (strain wPip).